The primary structure comprises 1166 residues: Reverse gyrase (1166 aa).

An RG N-terminal-type zinc finger spans residues 1 to 40 (MINVMYKNSCPNCGGDISADRLLNGLPCETCLPYINGIDG). 4 residues coordinate Zn(2+): Cys10, Cys13, Cys28, and Cys31. Residues Gln92 and 109–116 (APTGLGKT) contribute to the ATP site. The 190-residue stretch at 96 to 285 (LRRLVSNQSF…ALRLLTGFEP (190 aa)) folds into the Helicase ATP-binding domain. A DEAD box motif is present at residues 190-193 (DDAD). The interval 576-1166 (FNISTGLLIV…VNPLKSEQNV (591 aa)) is topoisomerase I. One can recognise a Toprim domain in the interval 580–743 (TGLLIVESPT…NIYRITYHEI (164 aa)). Residue Glu586 participates in Mg(2+) binding. An RG C-terminal-type zinc finger spans residues 662 to 689 (IKKCLDCNKTFSIASDKCPYCGSTNVQT). Zn(2+) contacts are provided by Cys665, Cys668, Cys679, and Cys682. Asp712 serves as a coordination point for Mg(2+). The 399-residue stretch at 759 to 1157 (NTNLVMSQIV…EIFSEISTLV (399 aa)) folds into the Topo IA-type catalytic domain. The active-site O-(5'-phospho-DNA)-tyrosine intermediate is the Tyr903.

This sequence in the N-terminal section; belongs to the DEAD box helicase family. DDVD subfamily. The protein in the C-terminal section; belongs to the type IA topoisomerase family. As to quaternary structure, monomer. Zn(2+) serves as cofactor. Requires Mg(2+) as cofactor.

It is found in the cytoplasm. The catalysed reaction is ATP + H2O = ADP + phosphate + H(+). Its activity is regulated as follows. Inhibited by UV light-induced lesions; substrate is completely cleaved but a nicked form accumulates, suggesting the reaction is blocked between the cleavage and ligation steps. Inhibited by actinomycin D; substrate DNA remains negatively supercoiled in this case. Activity is stimulated by SSB from S.solfataricus strain P2. Positive supercoiling is inhibited by Sul7d (also called Sso7d) from S.solfataricus strain MT4; SSB from S.solfataricus strain P2 relieves this inhibition. In terms of biological role, modifies the topological state of DNA by introducing positive supercoils in an ATP-dependent process. Increases the linking number in steps of +1. In vitro requires high concentrations to supercoil negatively supercoiled DNA, relaxes plasmid DNA first; DNA single-strand binding protein (SSB) from S.solfataricus strain P2 stimulates positive supercoiling. SSB stimulates DNA-binding by reverse gyrase, and thus all subsequent steps. Binds to single-stranded DNA, transiently cleaves and then rejoins the ends, introducing a positive supercoil in the process. The scissile phosphodiester is attacked by the catalytic tyrosine of the enzyme, resulting in the formation of a DNA-(5'-phosphotyrosyl)-enzyme intermediate. May be involved in DNA damage response. Probably involved in rewinding DNA strands in regions of the chromosome that have opened up to allow replication, transcription, DNA repair and/or for DNA protection. The sequence is that of Reverse gyrase from Saccharolobus shibatae (strain ATCC 51178 / DSM 5389 / JCM 8931 / NBRC 15437 / B12) (Sulfolobus shibatae).